The following is a 71-amino-acid chain: Beta-defensin 10 (71 aa).

A signal peptide spans 1–23 (MKTLCSLLLIGCLLFSYDTPVVG). 3 disulfides stabilise this stretch: C37–C66, C44–C59, and C49–C67.

It belongs to the beta-defensin family.

The protein resides in the secreted. Its function is as follows. Has antibacterial activity. This is Beta-defensin 10 (Defb10) from Rattus norvegicus (Rat).